We begin with the raw amino-acid sequence, 126 residues long: Probable cystatin-16 (126 aa).

The signal sequence occupies residues 1-20 (MFLKATLLLGLAVLGMHVWA). A disulfide bridge links C84 with C94. N106 carries an N-linked (GlcNAc...) asparagine glycan.

Belongs to the cystatin family.

It is found in the secreted. The sequence is that of Probable cystatin-16 from Bos taurus (Bovine).